The following is a 486-amino-acid chain: ATP synthase subunit beta (486 aa).

170–177 (GGAGVGKT) is a binding site for ATP.

The protein belongs to the ATPase alpha/beta chains family. As to quaternary structure, F-type ATPases have 2 components, CF(1) - the catalytic core - and CF(0) - the membrane proton channel. CF(1) has five subunits: alpha(3), beta(3), gamma(1), delta(1), epsilon(1). CF(0) has three main subunits: a(1), b(2) and c(9-12). The alpha and beta chains form an alternating ring which encloses part of the gamma chain. CF(1) is attached to CF(0) by a central stalk formed by the gamma and epsilon chains, while a peripheral stalk is formed by the delta and b chains.

The protein resides in the cell membrane. The enzyme catalyses ATP + H2O + 4 H(+)(in) = ADP + phosphate + 5 H(+)(out). Produces ATP from ADP in the presence of a proton gradient across the membrane. The catalytic sites are hosted primarily by the beta subunits. The polypeptide is ATP synthase subunit beta (Kineococcus radiotolerans (strain ATCC BAA-149 / DSM 14245 / SRS30216)).